The following is a 91-amino-acid chain: MKLAITITLAILALCCSPASAEICQSFADIIQGLFLGTPASFEAAVEPFKPDADMKAATTQLKTLVDFLPKNTKDSILKLMDKIAKSPLCA.

Positions 1 to 21 are cleaved as a signal peptide; that stretch reads MKLAITITLAILALCCSPASA.

The protein belongs to the secretoglobin family. As to quaternary structure, antiparallel homodimer; disulfide-linked. Interaction with LMBR1L is controversial. As to expression, club cells (nonciliated cells of the surface epithelium of the pulmonary airways). Expressed in lung, uterus, and prostate.

It is found in the secreted. Functionally, binds phosphatidylcholine, phosphatidylinositol, polychlorinated biphenyls (PCB) and weakly progesterone, potent inhibitor of phospholipase A2. In Equus caballus (Horse), this protein is Uteroglobin (SCGB1A1).